A 133-amino-acid chain; its full sequence is Small ribosomal subunit protein bS6 (133 aa).

The tract at residues 93-133 (KTAVTEPSPMMKEEPRRERRDDSAPRQERAEKKTETTEDNA) is disordered. A compositionally biased stretch (basic and acidic residues) spans 103 to 133 (MKEEPRRERRDDSAPRQERAEKKTETTEDNA).

This sequence belongs to the bacterial ribosomal protein bS6 family.

Its function is as follows. Binds together with bS18 to 16S ribosomal RNA. The protein is Small ribosomal subunit protein bS6 of Alteromonas mediterranea (strain DSM 17117 / CIP 110805 / LMG 28347 / Deep ecotype).